Here is a 127-residue protein sequence, read N- to C-terminus: Large ribosomal subunit protein bL12 (127 aa).

Residues 98-127 form a disordered region; sequence PKPIKEGAPKAEAESLKSKLEEAGAEVELK.

Belongs to the bacterial ribosomal protein bL12 family. As to quaternary structure, homodimer. Part of the ribosomal stalk of the 50S ribosomal subunit. Forms a multimeric L10(L12)X complex, where L10 forms an elongated spine to which 2 to 4 L12 dimers bind in a sequential fashion. Binds GTP-bound translation factors.

Functionally, forms part of the ribosomal stalk which helps the ribosome interact with GTP-bound translation factors. Is thus essential for accurate translation. This is Large ribosomal subunit protein bL12 from Amoebophilus asiaticus (strain 5a2).